Reading from the N-terminus, the 2242-residue chain is Large tegument protein deneddylase (2242 aa).

Residues 1-238 (MKVTQASCHQ…IDLTGVVRES (238 aa)) are deubiquitination activity. Residues 4-226 (TQASCHQGDI…AARLVSTYRD (223 aa)) form the Peptidase C76 domain. Catalysis depends on residues Cys-24, Asp-160, and His-162. Residues 239–318 (ADTAATTTTA…KTLATASSSS (80 aa)) are disordered. Low complexity predominate over residues 240–250 (DTAATTTTAAP). Pro residues predominate over residues 251–268 (SLPPLPDPIVDPGCPPGV). The segment covering 304-318 (PSTTSKTLATASSSS) has biased composition (low complexity). Positions 328-332 (SSAVP) are interaction with inner tegument protein. A compositionally biased stretch (polar residues) spans 1173–1190 (SQQKMEGQLQETRQQMTE). The tract at residues 1173-1229 (SQQKMEGQLQETRQQMTETSERLDRSLRQDPGSSSVTRVPEKPFKGQELAGRITPPP) is disordered. The span at 1191 to 1200 (TSERLDRSLR) shows a compositional bias: basic and acidic residues.

The protein belongs to the herpesviridae large tegument protein family. In terms of assembly, interacts with host CUL1 and CUL4A; these interactions inhibit the E3 ligase activity of cullins. Interacts with inner tegument protein. Interacts with capsid vertex specific component CVC2. Interacts with the major capsid protein/MCP.

It localises to the virion tegument. The protein localises to the host cytoplasm. Its subcellular location is the host nucleus. It catalyses the reaction Thiol-dependent hydrolysis of ester, thioester, amide, peptide and isopeptide bonds formed by the C-terminal Gly of ubiquitin (a 76-residue protein attached to proteins as an intracellular targeting signal).. Large tegument protein that plays multiple roles in the viral cycle. During viral entry, remains associated with the capsid while most of the tegument is detached and participates in the capsid transport toward the host nucleus. Plays a role in the routing of the capsid at the nuclear pore complex and subsequent uncoating. Within the host nucleus, acts as a deneddylase and promotes the degradation of nuclear CRLs (cullin-RING ubiquitin ligases) and thereby stabilizes nuclear CRL substrates, while cytoplasmic CRLs remain unaffected. These modifications prevent host cell cycle S-phase progression and create a favorable environment allowing efficient viral genome replication. Participates later in the secondary envelopment of capsids. Indeed, plays a linker role for the association of the outer viral tegument to the capsids together with the inner tegument protein. This chain is Large tegument protein deneddylase, found in Homo sapiens (Human).